We begin with the raw amino-acid sequence, 775 residues long: ADP-ribosylation factor GTPase-activating protein AGD4 (775 aa).

Residues 2–226 (ATFINLEDSP…IHQILTYAQQ (225 aa)) enclose the BAR domain. The region spanning 288–421 (EVIKQGYLLK…WVNKITKAIG (134 aa)) is the PH domain. One can recognise an Arf-GAP domain in the interval 467–603 (DDVSTILRGL…ALVIKDESEA (137 aa)). The segment at 482–505 (CAECNAPEPDWASLNLGVLLCIQC) adopts a C4-type zinc-finger fold. ANK repeat units lie at residues 682–711 (QGCSLLHVACHIGDSVLLELLLQFGADLNI) and 715–744 (HGRTPLHHCISSGNHKFAKILLRRGARPSI).

As to expression, expressed in roots, hypocotyls, cotyledons, leaf and shoot apical meristems and siliques.

Probable GTPase-activating protein. In Arabidopsis thaliana (Mouse-ear cress), this protein is ADP-ribosylation factor GTPase-activating protein AGD4 (AGD4).